Here is a 393-residue protein sequence, read N- to C-terminus: Xylose transport system permease protein XylH (393 aa).

Topologically, residues 1–24 are periplasmic; that stretch reads MSKSNPSEVKLAVPTSGGFSGLKS. The helical transmembrane segment at 25–45 threads the bilayer; sequence LNLQVFVMIAAIIAIMLFFTW. Topologically, residues 46–64 are cytoplasmic; it reads TTDGAYLSARNVSNLLRQT. A helical membrane pass occupies residues 65–85; the sequence is AITGILAVGMVFVIISAEIDL. The Periplasmic portion of the chain corresponds to 86–102; sequence SVGSMMGLLGGVAAICD. Residues 103 to 123 traverse the membrane as a helical segment; it reads VWLGWPLPLTIIVTLVLGLLL. Residues 124–135 lie on the Cytoplasmic side of the membrane; sequence GAWNGWWVAYRK. Residues 136–156 form a helical membrane-spanning segment; it reads VPSFIVTLAGMLAFRGILIGI. Over 157–175 the chain is Periplasmic; the sequence is TNGTTVSPTSAAMSQIGQS. The helical transmembrane segment at 176-196 threads the bilayer; the sequence is YLPASTGFIIGALGLMAFVGW. Over 197-214 the chain is Cytoplasmic; sequence QWRGRMRRQALGLQSPAS. The chain crosses the membrane as a helical span at residues 215–235; that stretch reads TAVVGRQALTAIIVLGAIWLL. At 236–239 the chain is on the periplasmic side; the sequence is NDYR. Residues 240 to 260 form a helical membrane-spanning segment; it reads GVPTPVLLLTLLLLGGMFMAT. The Cytoplasmic portion of the chain corresponds to 261–287; it reads RTAFGRRIYAIGGNLEAARLSGINVER. A helical transmembrane segment spans residues 288–308; sequence TKLAVFAINGLMVAIAGLILS. Residues 309-312 are Periplasmic-facing; it reads SRLG. Residues 313-333 form a helical membrane-spanning segment; sequence AGSPSAGNIAELDAIAACVIG. At 334-336 the chain is on the cytoplasmic side; that stretch reads GTS. The helical transmembrane segment at 337–357 threads the bilayer; it reads LAGGVGSVAGAVMGAFIMASL. The Periplasmic segment spans residues 358-365; it reads DNGMSMMD. A helical membrane pass occupies residues 366-386; that stretch reads VPTFWQYIVKGAILLLAVWMD. The Cytoplasmic segment spans residues 387 to 393; that stretch reads SATKRRS.

It belongs to the binding-protein-dependent transport system permease family. AraH/RbsC subfamily.

The protein resides in the cell inner membrane. In terms of biological role, part of the binding-protein-dependent transport system for D-xylose. Probably responsible for the translocation of the substrate across the membrane. This is Xylose transport system permease protein XylH (xylH) from Escherichia coli O6:H1 (strain CFT073 / ATCC 700928 / UPEC).